The chain runs to 144 residues: Large ribosomal subunit protein uL16 (144 aa).

Residues 1–17 (MLQPKKTKFRRQQKGRA) show a composition bias toward basic residues. The disordered stretch occupies residues 1–22 (MLQPKKTKFRRQQKGRAKGNAQ).

This sequence belongs to the universal ribosomal protein uL16 family. Part of the 50S ribosomal subunit.

Binds 23S rRNA and is also seen to make contacts with the A and possibly P site tRNAs. The chain is Large ribosomal subunit protein uL16 from Bacteroides fragilis (strain ATCC 25285 / DSM 2151 / CCUG 4856 / JCM 11019 / LMG 10263 / NCTC 9343 / Onslow / VPI 2553 / EN-2).